The primary structure comprises 199 residues: Probable GTP-binding protein EngB (199 aa).

The EngB-type G domain occupies 21 to 196 (TKPEYAFIGR…LTYIDEINKQ (176 aa)). GTP-binding positions include 29-36 (GRSNVGKS), 56-60 (GKTQL), 74-77 (DLPG), 141-144 (TKID), and 175-177 (TSS). Mg(2+) is bound by residues Ser36 and Thr58.

This sequence belongs to the TRAFAC class TrmE-Era-EngA-EngB-Septin-like GTPase superfamily. EngB GTPase family. Requires Mg(2+) as cofactor.

Its function is as follows. Necessary for normal cell division and for the maintenance of normal septation. The polypeptide is Probable GTP-binding protein EngB (Cytophaga hutchinsonii (strain ATCC 33406 / DSM 1761 / CIP 103989 / NBRC 15051 / NCIMB 9469 / D465)).